The chain runs to 238 residues: Ribonuclease PH (238 aa).

The disordered stretch occupies residues L66–Q88. Phosphate-binding positions include R86 and G124–R126.

It belongs to the RNase PH family. As to quaternary structure, homohexameric ring arranged as a trimer of dimers.

It carries out the reaction tRNA(n+1) + phosphate = tRNA(n) + a ribonucleoside 5'-diphosphate. Its function is as follows. Phosphorolytic 3'-5' exoribonuclease that plays an important role in tRNA 3'-end maturation. Removes nucleotide residues following the 3'-CCA terminus of tRNAs; can also add nucleotides to the ends of RNA molecules by using nucleoside diphosphates as substrates, but this may not be physiologically important. Probably plays a role in initiation of 16S rRNA degradation (leading to ribosome degradation) during starvation. The sequence is that of Ribonuclease PH from Ralstonia pickettii (strain 12J).